The following is a 556-amino-acid chain: MSKSIEKFPKELVSPIAQLHSLVEKNSKLHIKELFAAEQDRFQNYSVKFDQLVFDYSKHRITKSVLEQLFALAKTKQLTHWIERLFSQDKVNCTEQRAAMHWALRLPSEYSKFPELTKQVHTQLQRMYVLVEKIHAGQYRGATGEVIQDVVNIGVGGSDLGPQMVTHALCDFKVKTAKPLNVHFVSTMDGSQLSDLLHQLRPETTLFIISSKSFGTIDTLSNAQTVRQWLEKALGKHDRVVKSHFIGVSTKAEKMTEWGIAPENQLLLWDWVGGRYSLWSCIGFPIALTIGIDGFQQLLAGAHAVDEHFQNTNFEQNIPVLMALLGIWNNNFLNIQTHAVLPYDGRLKYFAAYLQQLEMESNGKSVQRDGQKVELDTCPIVWGEVGPNAQHAFYQLLHQGTQAVSCDFIAPIQRYNADHFTYVENAEALIEQHHLALSNCLAQSRLLAFGNEALDSAELKNLPIYKQYEGNQPSSTLLLKELNPYSLGMLIALYEHKVFVQSVIWNINPFDQWGVEKGKQIADQLLPILNGAQNDLSALDASTRGLIKILLGKVDG.

Glutamate 360 (proton donor) is an active-site residue. Residues histidine 391 and lysine 519 contribute to the active site.

It belongs to the GPI family.

The protein localises to the cytoplasm. The enzyme catalyses alpha-D-glucose 6-phosphate = beta-D-fructose 6-phosphate. The protein operates within carbohydrate biosynthesis; gluconeogenesis. Its pathway is carbohydrate degradation; glycolysis; D-glyceraldehyde 3-phosphate and glycerone phosphate from D-glucose: step 2/4. In terms of biological role, catalyzes the reversible isomerization of glucose-6-phosphate to fructose-6-phosphate. This is Glucose-6-phosphate isomerase from Acinetobacter baumannii (strain SDF).